A 219-amino-acid chain; its full sequence is Transcriptional regulatory protein QseB (219 aa).

Residues R2 to V116 form the Response regulatory domain. D51 is subject to 4-aspartylphosphate. Positions S124–D218 form a DNA-binding region, ompR/PhoB-type.

In terms of processing, phosphorylated by QseC.

It localises to the cytoplasm. Its function is as follows. Member of a two-component regulatory system QseB/QseC. Activates the flagella regulon by activating transcription of flhDC. The protein is Transcriptional regulatory protein QseB (qseB) of Salmonella typhimurium (strain LT2 / SGSC1412 / ATCC 700720).